We begin with the raw amino-acid sequence, 259 residues long: Glycerol-3-phosphate acyltransferase (259 aa).

7 helical membrane-spanning segments follow: residues 11 to 31 (IILA…IIIV), 62 to 82 (LVVA…AILL), 93 to 112 (TSYF…PIYY), 124 to 144 (LGLL…VWFI), 152 to 172 (VSVA…IPYL), 188 to 208 (FSVA…HYWF), and 211 to 231 (IWAS…LILG).

It belongs to the PlsY family. As to quaternary structure, probably interacts with PlsX.

Its subcellular location is the cell membrane. The catalysed reaction is an acyl phosphate + sn-glycerol 3-phosphate = a 1-acyl-sn-glycero-3-phosphate + phosphate. The protein operates within lipid metabolism; phospholipid metabolism. Its function is as follows. Catalyzes the transfer of an acyl group from acyl-phosphate (acyl-PO(4)) to glycerol-3-phosphate (G3P) to form lysophosphatidic acid (LPA). This enzyme utilizes acyl-phosphate as fatty acyl donor, but not acyl-CoA or acyl-ACP. In Mycoplasma capricolum subsp. capricolum (strain California kid / ATCC 27343 / NCTC 10154), this protein is Glycerol-3-phosphate acyltransferase.